Here is a 162-residue protein sequence, read N- to C-terminus: MTPSPDTALLGRLRDLLEPVAAGCGLHLEDVAVSPAGRRRRVRVTLDLADGPGALGSNDLADASRAVSAALDDADVVTGPYVLEVSTPGTDRPLTQPRHFRRAQGRLVTLTLAAGTHVSGRLLSADDDGIHVRTDAGATTTFAYADVATGRVEVELRHLEEG.

It belongs to the RimP family.

Its subcellular location is the cytoplasm. In terms of biological role, required for maturation of 30S ribosomal subunits. The sequence is that of Ribosome maturation factor RimP from Beutenbergia cavernae (strain ATCC BAA-8 / DSM 12333 / CCUG 43141 / JCM 11478 / NBRC 16432 / NCIMB 13614 / HKI 0122).